The sequence spans 452 residues: 3-phosphoshikimate 1-carboxyvinyltransferase (452 aa).

Residues K24, S25, and R29 each coordinate 3-phosphoshikimate. Phosphoenolpyruvate is bound at residue K24. Phosphoenolpyruvate contacts are provided by G95 and R123. Residues S167, Q169, D319, and K346 each contribute to the 3-phosphoshikimate site. Position 169 (Q169) interacts with phosphoenolpyruvate. Residue D319 is the Proton acceptor of the active site. Phosphoenolpyruvate is bound by residues R350 and R394.

The protein belongs to the EPSP synthase family. As to quaternary structure, monomer.

The protein resides in the cytoplasm. The enzyme catalyses 3-phosphoshikimate + phosphoenolpyruvate = 5-O-(1-carboxyvinyl)-3-phosphoshikimate + phosphate. It participates in metabolic intermediate biosynthesis; chorismate biosynthesis; chorismate from D-erythrose 4-phosphate and phosphoenolpyruvate: step 6/7. Functionally, catalyzes the transfer of the enolpyruvyl moiety of phosphoenolpyruvate (PEP) to the 5-hydroxyl of shikimate-3-phosphate (S3P) to produce enolpyruvyl shikimate-3-phosphate and inorganic phosphate. This is 3-phosphoshikimate 1-carboxyvinyltransferase from Phenylobacterium zucineum (strain HLK1).